Here is a 202-residue protein sequence, read N- to C-terminus: Pyridoxal 5'-phosphate synthase subunit PdxT (202 aa).

48–50 serves as a coordination point for L-glutamine; that stretch reads GES. The active-site Nucleophile is the cysteine 80. Residues arginine 112 and 139-140 each bind L-glutamine; that span reads IR. Catalysis depends on charge relay system residues histidine 180 and glutamate 182.

Belongs to the glutaminase PdxT/SNO family. In the presence of PdxS, forms a dodecamer of heterodimers. Only shows activity in the heterodimer.

It catalyses the reaction aldehydo-D-ribose 5-phosphate + D-glyceraldehyde 3-phosphate + L-glutamine = pyridoxal 5'-phosphate + L-glutamate + phosphate + 3 H2O + H(+). The enzyme catalyses L-glutamine + H2O = L-glutamate + NH4(+). It participates in cofactor biosynthesis; pyridoxal 5'-phosphate biosynthesis. Its function is as follows. Catalyzes the hydrolysis of glutamine to glutamate and ammonia as part of the biosynthesis of pyridoxal 5'-phosphate. The resulting ammonia molecule is channeled to the active site of PdxS. The polypeptide is Pyridoxal 5'-phosphate synthase subunit PdxT (Hyperthermus butylicus (strain DSM 5456 / JCM 9403 / PLM1-5)).